We begin with the raw amino-acid sequence, 346 residues long: Probable RNA methyltransferase PA14_40730 (346 aa).

E91 functions as the Proton acceptor in the catalytic mechanism. In terms of domain architecture, Radical SAM core spans 94-320 (LLPRGGLCVS…TKVRNSAGQD (227 aa)). Residues C101 and C325 are joined by a disulfide bond. Positions 108, 112, and 115 each coordinate [4Fe-4S] cluster. S-adenosyl-L-methionine-binding positions include 153–154 (GE), S183, 206–208 (SLH), and N282. C325 functions as the S-methylcysteine intermediate in the catalytic mechanism.

Belongs to the radical SAM superfamily. RlmN family. The cofactor is [4Fe-4S] cluster.

The protein localises to the cytoplasm. This is Probable RNA methyltransferase PA14_40730 from Pseudomonas aeruginosa (strain UCBPP-PA14).